We begin with the raw amino-acid sequence, 428 residues long: Mitochondrial import inner membrane translocase subunit TIM50-C (428 aa).

Residues 59–79 (LFTCTALPAAAPALFSILHTA) traverse the membrane as a helical segment. Residues 80–428 (RGYSSTTKQE…KQWSRNILGR (349 aa)) are Mitochondrial intermembrane-facing. Positions 112 to 138 (FPQTSPEVDSNAEQERKKREEEEEKEN) are disordered. The segment covering 124–138 (EQERKKREEEEEKEN) has biased composition (basic and acidic residues). The FCP1 homology domain maps to 224-367 (YVQPRYTLVL…LDLIAFLKII (144 aa)).

It belongs to the TIM50 family. In terms of assembly, component of the TIM23 complex at least composed of Tim23, Tim17 (Tim17a1, Tim17a2 or Tim17b1) and a Tim50.

The protein localises to the mitochondrion inner membrane. Essential component of the TIM23 complex, a complex that mediates the translocation of transit peptide-containing proteins across the mitochondrial inner membrane. This Drosophila melanogaster (Fruit fly) protein is Mitochondrial import inner membrane translocase subunit TIM50-C (ttm50).